The sequence spans 367 residues: Glutamate 5-kinase (367 aa).

Lys-10 is a binding site for ATP. Ser-50, Asp-137, and Asn-149 together coordinate substrate. Residues 169 to 170 and 211 to 217 contribute to the ATP site; these read TD and TGGMETK. The PUA domain maps to 275-353; it reads AGDITVDDGA…QDISDILGYE (79 aa).

Belongs to the glutamate 5-kinase family.

It is found in the cytoplasm. The enzyme catalyses L-glutamate + ATP = L-glutamyl 5-phosphate + ADP. It functions in the pathway amino-acid biosynthesis; L-proline biosynthesis; L-glutamate 5-semialdehyde from L-glutamate: step 1/2. Catalyzes the transfer of a phosphate group to glutamate to form L-glutamate 5-phosphate. The chain is Glutamate 5-kinase from Sodalis glossinidius (strain morsitans).